Reading from the N-terminus, the 761-residue chain is Prolyl oligopeptidase A (761 aa).

Catalysis depends on charge relay system residues Ser-606, Asp-690, and His-726.

It belongs to the peptidase S9A family. In terms of assembly, monomer.

The enzyme catalyses Hydrolysis of Pro-|-Xaa &gt;&gt; Ala-|-Xaa in oligopeptides.. Its function is as follows. Housekeeping prolyl oligopeptidase (POP) that behaves like a conventional POP by cleaving peptide bonds on the C-terminal side of prolyl residues within peptides that are up to approximately 30 amino acids long. The chain is Prolyl oligopeptidase A from Amanita bisporigera (Destroying angel).